Consider the following 680-residue polypeptide: DNA-directed RNA polymerase subunit beta' (680 aa).

The Zn(2+) site is built by C69, C71, C87, and C90. Residues D489, D491, and D493 each coordinate Mg(2+).

This sequence belongs to the RNA polymerase beta' chain family. RpoC1 subfamily. In terms of assembly, in plastids the minimal PEP RNA polymerase catalytic core is composed of four subunits: alpha, beta, beta', and beta''. When a (nuclear-encoded) sigma factor is associated with the core the holoenzyme is formed, which can initiate transcription. Mg(2+) is required as a cofactor. It depends on Zn(2+) as a cofactor.

It localises to the plastid. It is found in the chloroplast. It catalyses the reaction RNA(n) + a ribonucleoside 5'-triphosphate = RNA(n+1) + diphosphate. DNA-dependent RNA polymerase catalyzes the transcription of DNA into RNA using the four ribonucleoside triphosphates as substrates. The chain is DNA-directed RNA polymerase subunit beta' from Carica papaya (Papaya).